A 330-amino-acid chain; its full sequence is Phosphate acyltransferase (330 aa).

It belongs to the PlsX family. In terms of assembly, homodimer. Probably interacts with PlsY.

The protein resides in the cytoplasm. It carries out the reaction a fatty acyl-[ACP] + phosphate = an acyl phosphate + holo-[ACP]. Its pathway is lipid metabolism; phospholipid metabolism. In terms of biological role, catalyzes the reversible formation of acyl-phosphate (acyl-PO(4)) from acyl-[acyl-carrier-protein] (acyl-ACP). This enzyme utilizes acyl-ACP as fatty acyl donor, but not acyl-CoA. The protein is Phosphate acyltransferase of Bacillus thuringiensis (strain Al Hakam).